We begin with the raw amino-acid sequence, 835 residues long: Neuroligin-2 (835 aa).

An N-terminal signal peptide occupies residues 1–14; the sequence is MWLLALCLVGLAGA. At 15–677 the chain is on the extracellular side; that stretch reads QRGGGGPGGG…DSRDYSTELS (663 aa). 2 N-linked (GlcNAc...) asparagine glycosylation sites follow: Asn98 and Asn136. 3 disulfide bridges follow: Cys106/Cys141, Cys317/Cys328, and Cys487/Cys521. N-linked (GlcNAc...) asparagine glycosylation occurs at Asn522. Residues 623 to 668 form a disordered region; the sequence is PPYATRWPPRPPAGAPGTRRPPPPATLPPEPEPEPGPRAYDRFPGD. Residues 630–658 show a composition bias toward pro residues; sequence PPRPPAGAPGTRRPPPPATLPPEPEPEPG. A helical transmembrane segment spans residues 678–698; it reads VTVAVGASLLFLNILAFAALY. A required for interaction with LHFPL4 region spans residues 678–698; it reads VTVAVGASLLFLNILAFAALY. Residues 699 to 835 are Cytoplasmic-facing; the sequence is YKRDRRQELR…LPHPHSTTRV (137 aa). Residues Ser713 and Ser718 each carry the phosphoserine modification. The segment at 790 to 835 is disordered; the sequence is LLPSGLGPPPPPPPPSLHPFGPFPPPPPTATSHNNTLPHPHSTTRV. A compositionally biased stretch (pro residues) spans 795–818; the sequence is LGPPPPPPPPSLHPFGPFPPPPPT. The span at 823 to 835 shows a compositional bias: polar residues; it reads NNTLPHPHSTTRV.

This sequence belongs to the type-B carboxylesterase/lipase family. In terms of assembly, interacts with neurexins NRXN1, NRXN2 and NRXN3. Interaction with neurexins is mediated by heparan sulfate glycan modification on neurexin. Interacts (via its C-terminus) with DLG4/PSD-95 (via PDZ domain 3). Interacts with PATJ. Interacts with GPHN. Interacts with MDGA1 and MDGA2. Found in a complex with MAGI2 and IGSF9B, where it interacts with MAGI2 (via WW 1, WW 2 and PDZ 2 domains). Identified in a complex of 720 kDa composed of LHFPL4, NLGN2, GABRA1, GABRB2, GABRG2 and GABRB3. Interacts with LHFPL4; leading to mutual regulation of the protein level and synaptic clustering. Interacts with NLGN2. As to expression, expressed in the blood vessel walls. Detected in colon, brain and pancreas islets of Langerhans (at protein level). Detected in brain, and at lower levels in pancreas islet beta cells.

The protein resides in the cell membrane. It is found in the postsynaptic cell membrane. The protein localises to the presynaptic cell membrane. Functionally, transmembrane scaffolding protein involved in cell-cell interactions via its interactions with neurexin family members. Mediates cell-cell interactions both in neurons and in other types of cells, such as Langerhans beta cells. Plays a role in synapse function and synaptic signal transmission, especially via gamma-aminobutyric acid receptors (GABA(A) receptors). Functions by recruiting and clustering synaptic proteins. Promotes clustering of postsynaptic GABRG2 and GPHN. Promotes clustering of postsynaptic LHFPL4. Modulates signaling by inhibitory synapses, and thereby plays a role in controlling the ratio of signaling by excitatory and inhibitory synapses and information processing. Required for normal signal amplitude from inhibitory synapses, but is not essential for normal signal frequency. May promote the initial formation of synapses, but is not essential for this. In vitro, triggers the de novo formation of presynaptic structures. Mediates cell-cell interactions between Langerhans beta cells and modulates insulin secretion. The sequence is that of Neuroligin-2 (NLGN2) from Homo sapiens (Human).